The sequence spans 128 residues: SH2 domain-containing protein 1A (128 aa).

In terms of domain architecture, SH2 spans 6–102 (VYHGKISRET…GIVIPLQYPV (97 aa)). Positions 67 to 92 (ETAPGVHKRFFRKIKNLISAFQKPDQ) are interaction with FYN SH3 domain. Position 89 is an N6-acetyllysine (lysine 89). The tract at residues 104–128 (KKPSARSTQGATGRRDDPDVFLKTP) is disordered. Residues 116 to 128 (GRRDDPDVFLKTP) show a composition bias toward basic and acidic residues.

As to quaternary structure, interacts with CD84, CD244, LY9, SLAMF1 and FYN. Interacts with NTRK1, NTRK2 and NTRK3.

The protein localises to the cytoplasm. Cytoplasmic adapter regulating receptors of the signaling lymphocytic activation molecule (SLAM) family such as SLAMF1, CD244, LY9, CD84, SLAMF6 and SLAMF7. In SLAM signaling seems to cooperate with SH2D1B/EAT-2. Initially it has been proposed that association with SLAMF1 prevents SLAMF1 binding to inhibitory effectors including INPP5D/SHIP1 and PTPN11/SHP-2. However, by simultaneous interactions, recruits FYN which subsequently phosphorylates and activates SLAMF1. Positively regulates CD244/2B4- and CD84-mediated natural killer (NK) cell functions. Can also promote CD48-, SLAMF6 -, LY9-, and SLAMF7-mediated NK cell activation. In the context of NK cell-mediated cytotoxicity enhances conjugate formation with target cells. May also regulate the activity of the neurotrophin receptors NTRK1, NTRK2 and NTRK3. This Bos taurus (Bovine) protein is SH2 domain-containing protein 1A (SH2D1A).